Consider the following 354-residue polypeptide: MGEQPIFSTRAHVFQIDPNTKKNWVPTSKHAVTVSYFYDSTRNVYRIISLDGSKAIINSTITPNMTFTKTSQKFGQWADSRANTVYGLGFSSEHHLSKFAEKFQEFKEAARLAKEKSQEKMELTSTPSQESAGGDLQSPLTPESINGTDDERTPDVTQNSEPRAEPTQNALPFSHSSAISKHWEAELATLKGNNAKLTAALLESTANVKQWKQQLAAYQEEAERLHKRVTELECVSSQANAVHTHKTELNQTIQELEETLKLKEEEIERLKQEIDNARELQEQRDSLTQKLQEVEIRNKDLEGQLSDLEQRLEKSQNEQEAFRNNLKTLLEILDGKIFELTELRDNLAKLLECS.

The 110-residue stretch at 1 to 110 (MGEQPIFSTR…EKFQEFKEAA (110 aa)) folds into the WH1 domain. An N-acetylglycine modification is found at G2. The interval 114-173 (KEKSQEKMELTSTPSQESAGGDLQSPLTPESINGTDDERTPDVTQNSEPRAEPTQNALPF) is disordered. Polar residues-rich tracts occupy residues 138-147 (SPLTPESING) and 155-173 (DVTQ…ALPF). The stretch at 181–352 (KHWEAELATL…LRDNLAKLLE (172 aa)) forms a coiled coil. The tract at residues 290-354 (KLQEVEIRNK…DNLAKLLECS (65 aa)) is required for tetramerization. Position 306 is a phosphoserine (S306).

The protein belongs to the Homer family. As to quaternary structure, tetramer; this tetrameric structure is critical for forming the high-order complex with SHANK1, which in turn is necessary for the structural and functional integrity of dendritic spines. Interacts with GRM1, GRM5, ITPR1, DNM3, RYR1, RYR2 and SHANK3. Interacts with IFT57 and OPHN1. Isoform 1 encodes a coiled-coil structure that mediates homo- and heteromultimerization. Interacts with SHANK1; forms high-order polymerized complex with a mesh-like network structure, at least composed of SHANK1, HOMER1 and DLGAP1; the complex formation is SHANK1 multimerization dependent. Interacts with NFATC4. Interacts with DAGLA (via PPXXF motif); this interaction is required for the cell membrane localization of DAGLA. Interacts with SRGAP2.

It localises to the cytoplasm. Its subcellular location is the postsynaptic density. The protein localises to the synapse. It is found in the cell projection. The protein resides in the dendritic spine. In terms of biological role, postsynaptic density scaffolding protein. Binds and cross-links cytoplasmic regions of GRM1, GRM5, ITPR1, DNM3, RYR1, RYR2, SHANK1 and SHANK3. By physically linking GRM1 and GRM5 with ER-associated ITPR1 receptors, it aids the coupling of surface receptors to intracellular calcium release. May also couple GRM1 to PI3 kinase through its interaction with AGAP2. Isoform 1 regulates the trafficking and surface expression of GRM5. Isoform 3 acts as a natural dominant negative, in dynamic competition with constitutively expressed isoform 1 to regulate synaptic metabotropic glutamate function. Isoform 3, may be involved in the structural changes that occur at synapses during long-lasting neuronal plasticity and development. Forms a high-order complex with SHANK1, which in turn is necessary for the structural and functional integrity of dendritic spines. Negatively regulates T cell activation by inhibiting the calcineurin-NFAT pathway. Acts by competing with calcineurin/PPP3CA for NFAT protein binding, hence preventing NFAT activation by PPP3CA. The polypeptide is Homer protein homolog 1 (Homo sapiens (Human)).